The sequence spans 147 residues: FAD synthase (147 aa).

ATP-binding positions include 13 to 14 (TF), 18 to 21 (HEGH), Asp100, and Phe127.

The protein belongs to the archaeal FAD synthase family. As to quaternary structure, homodimer. It depends on a divalent metal cation as a cofactor.

It carries out the reaction FMN + ATP + H(+) = FAD + diphosphate. Its pathway is cofactor biosynthesis; FAD biosynthesis; FAD from FMN: step 1/1. Functionally, catalyzes the transfer of the AMP portion of ATP to flavin mononucleotide (FMN) to produce flavin adenine dinucleotide (FAD) coenzyme. The polypeptide is FAD synthase (Korarchaeum cryptofilum (strain OPF8)).